The chain runs to 861 residues: Valine--tRNA ligase (861 aa).

The short motif at 42–52 (PNITGRIHMGH) is the 'HIGH' region element. The 'KMSKS' region signature appears at 521–525 (KMSKS). An ATP-binding site is contributed by Lys-524. Residues 792–861 (VAGLNLQSEI…ILNQILGDLM (70 aa)) are a coiled coil.

It belongs to the class-I aminoacyl-tRNA synthetase family. ValS type 1 subfamily. Monomer.

The protein localises to the cytoplasm. It catalyses the reaction tRNA(Val) + L-valine + ATP = L-valyl-tRNA(Val) + AMP + diphosphate. In terms of biological role, catalyzes the attachment of valine to tRNA(Val). As ValRS can inadvertently accommodate and process structurally similar amino acids such as threonine, to avoid such errors, it has a 'posttransfer' editing activity that hydrolyzes mischarged Thr-tRNA(Val) in a tRNA-dependent manner. The protein is Valine--tRNA ligase of Pseudothermotoga lettingae (strain ATCC BAA-301 / DSM 14385 / NBRC 107922 / TMO) (Thermotoga lettingae).